A 347-amino-acid polypeptide reads, in one-letter code: Anthranilate phosphoribosyltransferase (347 aa).

5-phospho-alpha-D-ribose 1-diphosphate contacts are provided by residues G88, 91-92 (GD), T96, 98-101 (NIST), 116-124 (KHGNRSVSS), and S128. Residue G88 participates in anthranilate binding. Position 100 (S100) interacts with Mg(2+). Position 119 (N119) interacts with anthranilate. R174 serves as a coordination point for anthranilate. Positions 232 and 233 each coordinate Mg(2+).

This sequence belongs to the anthranilate phosphoribosyltransferase family. Homodimer. Mg(2+) serves as cofactor.

The enzyme catalyses N-(5-phospho-beta-D-ribosyl)anthranilate + diphosphate = 5-phospho-alpha-D-ribose 1-diphosphate + anthranilate. It functions in the pathway amino-acid biosynthesis; L-tryptophan biosynthesis; L-tryptophan from chorismate: step 2/5. Catalyzes the transfer of the phosphoribosyl group of 5-phosphorylribose-1-pyrophosphate (PRPP) to anthranilate to yield N-(5'-phosphoribosyl)-anthranilate (PRA). The polypeptide is Anthranilate phosphoribosyltransferase (Shewanella oneidensis (strain ATCC 700550 / JCM 31522 / CIP 106686 / LMG 19005 / NCIMB 14063 / MR-1)).